Reading from the N-terminus, the 175-residue chain is uncharacterized protein (175 aa).

The next 5 membrane-spanning stretches (helical) occupy residues 25–45 (MIAI…TTIS), 46–66 (ATGP…FFLL), 97–117 (FAGW…LTAV), 124–144 (WLPG…LTLL), and 155–175 (TEFW…VTGI).

This sequence belongs to the amino acid-polyamine-organocation (APC) superfamily.

It localises to the cell membrane. This is an uncharacterized protein from Lactobacillus delbrueckii subsp. lactis.